Consider the following 292-residue polypeptide: Pyruvate formate-lyase 2-activating enzyme (292 aa).

The region spanning 33-287 is the Radical SAM core domain; sequence NDGEGIRTVV…REMAERAGLQ (255 aa). [4Fe-4S] cluster-binding residues include Cys-47, Cys-51, and Cys-54. 53-55 lines the S-adenosyl-L-methionine pocket; that stretch reads WCA. Residues 62 to 96 form the 4Fe-4S ferredoxin-type domain; the sequence is GKIQTVRREAKCLHCAKCLRDADECPSGAFERIGR. Residues Gly-126, 175 to 177, and His-247 contribute to the S-adenosyl-L-methionine site; that span reads DLK.

This sequence belongs to the organic radical-activating enzymes family. The cofactor is [4Fe-4S] cluster.

The protein localises to the cytoplasm. It carries out the reaction glycyl-[formate C-acetyltransferase] + reduced [flavodoxin] + S-adenosyl-L-methionine = glycin-2-yl radical-[formate C-acetyltransferase] + semiquinone [flavodoxin] + 5'-deoxyadenosine + L-methionine + H(+). Functionally, activation of pyruvate formate-lyase 2 under anaerobic conditions by generation of an organic free radical, using S-adenosylmethionine and reduced flavodoxin as cosubstrates to produce 5'-deoxy-adenosine. The protein is Pyruvate formate-lyase 2-activating enzyme (pflC) of Escherichia coli (strain K12).